Here is a 210-residue protein sequence, read N- to C-terminus: Putative 3-methyladenine DNA glycosylase (210 aa).

This sequence belongs to the DNA glycosylase MPG family.

In Lactobacillus acidophilus (strain ATCC 700396 / NCK56 / N2 / NCFM), this protein is Putative 3-methyladenine DNA glycosylase.